The primary structure comprises 857 residues: Protein dalmatian (857 aa).

Disordered regions lie at residues 1–50 and 146–194; these read MVRT…KLSI and VQKS…FFHR. 2 stretches are compositionally biased toward polar residues: residues 146–156 and 165–176; these read VQKSTQPQNIK and SPCQQRIRSKSP. Residues Ser173, Ser175, Ser184, and Ser222 each carry the phosphoserine modification. Basic residues predominate over residues 251-271; sequence GKPRAKRTAKKVRPVGNRRKV. The interval 251 to 281 is disordered; sequence GKPRAKRTAKKVRPVGNRRKVSTKDNEPEPV. Ser405 carries the phosphoserine modification. 2 disordered regions span residues 470–514 and 737–830; these read SICP…NAEN and PPRP…RDIE. The segment covering 771–781 has biased composition (basic and acidic residues); that stretch reads KQPRRTYVKER. Over residues 797 to 806 the composition is skewed to acidic residues; sequence SESEDEDEQD. The span at 807–816 shows a compositional bias: basic and acidic residues; sequence SHDKSLDSPE. The segment covering 817–826 has biased composition (basic residues); the sequence is KKRHHVKRPR.

It localises to the nucleus. Its subcellular location is the chromosome. In terms of biological role, regulator of sister chromatid cohesion in mitosis. Probably involved in development of the central nervous system. In Drosophila melanogaster (Fruit fly), this protein is Protein dalmatian (dmt).